Consider the following 464-residue polypeptide: Signal recognition particle 54 kDa protein (464 aa).

GTP is bound by residues 104 to 111 (GLQGSGKT), 184 to 188 (DTAGR), and 242 to 245 (TKLD).

This sequence belongs to the GTP-binding SRP family. SRP54 subfamily. As to quaternary structure, part of the signal recognition particle protein translocation system, which is composed of SRP and FtsY. Archaeal SRP consists of a 7S RNA molecule of 300 nucleotides and two protein subunits: SRP54 and SRP19.

Its subcellular location is the cytoplasm. It carries out the reaction GTP + H2O = GDP + phosphate + H(+). Involved in targeting and insertion of nascent membrane proteins into the cytoplasmic membrane. Binds to the hydrophobic signal sequence of the ribosome-nascent chain (RNC) as it emerges from the ribosomes. The SRP-RNC complex is then targeted to the cytoplasmic membrane where it interacts with the SRP receptor FtsY. This chain is Signal recognition particle 54 kDa protein, found in Halorubrum lacusprofundi (strain ATCC 49239 / DSM 5036 / JCM 8891 / ACAM 34).